Here is a 321-residue protein sequence, read N- to C-terminus: Large ribosomal subunit protein uL10 (321 aa).

Residues 284–321 are disordered; sequence SAGTAPTGGGAAAAAVEEKKEEPEEESDDDIGFSLFDD. Residues 306–321 are compositionally biased toward acidic residues; sequence PEEESDDDIGFSLFDD.

This sequence belongs to the universal ribosomal protein uL10 family. In terms of assembly, P0 forms a pentameric complex by interaction with dimers of P1 and P2. In terms of processing, phosphorylated.

In terms of biological role, ribosomal protein P0 is the functional equivalent of E.coli protein L10. The sequence is that of Large ribosomal subunit protein uL10 from Oxybasis rubra (Red goosefoot).